Reading from the N-terminus, the 332-residue chain is dTDP-3,4-didehydro-2,6-dideoxy-alpha-D-glucose 3-reductase (332 aa).

12–18 contributes to the NADP(+) binding site; sequence CASFAWR. Substrate is bound at residue arginine 19. Residues 37 to 38, tyrosine 58, leucine 74, and histidine 79 contribute to the NADP(+) site; that span reads SR. Residue lysine 97 is the Proton donor of the active site. Arginine 165 and aspartate 177 together coordinate NADP(+). Residues tyrosine 235 and threonine 255 each coordinate substrate.

Belongs to the Gfo/Idh/MocA family. In terms of assembly, monomer.

The enzyme catalyses dTDP-4-dehydro-2,6-dideoxy-alpha-D-glucose + NADP(+) = dTDP-3,4-didehydro-2,6-dideoxy-alpha-D-glucose + NADPH + H(+). In terms of biological role, involved in the biosynthesis of forosamine ((4-dimethylamino)-2,3,4,6-tetradeoxy-alpha-D-threo-hexopyranose), a highly deoxygenated sugar component of several bioactive natural products such as the insecticidal spinosyns A and D. Catalyzes the reduction of the C-3 keto moiety of dTDP-3,4-diketo-2,6-dideoxy-alpha-D-glucose to yield dTDP-4-keto-2,6-dideoxy-alpha-D-glucose. NADPH is the better reductant, however NADH can also be used. This Saccharopolyspora spinosa protein is dTDP-3,4-didehydro-2,6-dideoxy-alpha-D-glucose 3-reductase.